We begin with the raw amino-acid sequence, 137 residues long: Phosphomevalonate dehydratase small subunit (137 aa).

Serine 65 (proton acceptor) is an active-site residue.

It belongs to the AcnX type II small subunit family. Heterodimer composed of a large subunit (PMDh-L) and a small subunit (PMDh-S).

The enzyme catalyses (R)-5-phosphomevalonate = (2E)-3-methyl-5-phosphooxypent-2-enoate + H2O. It participates in isoprenoid biosynthesis; isopentenyl diphosphate biosynthesis via mevalonate pathway. Component of a hydro-lyase that catalyzes the dehydration of mevalonate 5-phosphate (MVA5P) to form trans-anhydromevalonate 5-phosphate (tAHMP). Involved in the archaeal mevalonate (MVA) pathway, which provides fundamental precursors for isoprenoid biosynthesis, such as isopentenyl diphosphate (IPP) and dimethylallyl diphosphate (DMAPP). This is Phosphomevalonate dehydratase small subunit from Methanococcoides burtonii (strain DSM 6242 / NBRC 107633 / OCM 468 / ACE-M).